Here is a 451-residue protein sequence, read N- to C-terminus: Phosphoglucosamine mutase (451 aa).

Residue Ser101 is the Phosphoserine intermediate of the active site. Positions 101, 240, 242, and 244 each coordinate Mg(2+). Ser101 carries the post-translational modification Phosphoserine.

This sequence belongs to the phosphohexose mutase family. Requires Mg(2+) as cofactor. Activated by phosphorylation.

The catalysed reaction is alpha-D-glucosamine 1-phosphate = D-glucosamine 6-phosphate. Its function is as follows. Catalyzes the conversion of glucosamine-6-phosphate to glucosamine-1-phosphate. The protein is Phosphoglucosamine mutase of Thioalkalivibrio sulfidiphilus (strain HL-EbGR7).